Consider the following 152-residue polypeptide: Large ribosomal subunit protein bL9 (152 aa).

This sequence belongs to the bacterial ribosomal protein bL9 family.

Functionally, binds to the 23S rRNA. This Parasynechococcus marenigrum (strain WH8102) protein is Large ribosomal subunit protein bL9.